The primary structure comprises 408 residues: DNA primase DnaG (408 aa).

The 80-residue stretch at 171–250 (DAIIIVEGRA…AYSPRGKSVE (80 aa)) folds into the Toprim domain. Mg(2+) contacts are provided by Glu-177, Asp-219, and Asp-221. A disordered region spans residues 276–323 (AEENVERLPPSAAPAEVRAPAGAGRTSEGERPPRREWDSKPPSTLGEH). Low complexity predominate over residues 284-298 (PPSAAPAEVRAPAGA). The span at 302-314 (SEGERPPRREWDS) shows a compositional bias: basic and acidic residues.

The protein belongs to the archaeal DnaG primase family. Forms a ternary complex with MCM helicase and DNA. Mg(2+) serves as cofactor.

It carries out the reaction ssDNA + n NTP = ssDNA/pppN(pN)n-1 hybrid + (n-1) diphosphate.. Functionally, RNA polymerase that catalyzes the synthesis of short RNA molecules used as primers for DNA polymerase during DNA replication. The polypeptide is DNA primase DnaG (Methanoculleus marisnigri (strain ATCC 35101 / DSM 1498 / JR1)).